Reading from the N-terminus, the 459-residue chain is U-box domain-containing protein 75 (459 aa).

The U-box domain occupies 64 to 138 (AVPAVFICPI…AAWFSRRYTR (75 aa)). ARM repeat units follow at residues 188–229 (QSVT…GVPL) and 231–270 (ADAK…ILME).

As to quaternary structure, interacts with GPA1. In terms of tissue distribution, expressed highly in panicles at flowering time, at moderate levels in vegetative shoot apices, leaf sheaths, leaf blades, and elongating internodes, and at low levels in roots.

It localises to the cell membrane. The catalysed reaction is S-ubiquitinyl-[E2 ubiquitin-conjugating enzyme]-L-cysteine + [acceptor protein]-L-lysine = [E2 ubiquitin-conjugating enzyme]-L-cysteine + N(6)-ubiquitinyl-[acceptor protein]-L-lysine.. It participates in protein modification; protein ubiquitination. In terms of biological role, E3 ubiquitin ligase that may function as positive regulator of brassinosteroid (BR) signaling. Possesses E3 ubiquitin ligase in vitro. Acts together with the heterotrimeric G alpha subunit GPA1 at the plasma membrane to mediate a BR signaling pathway that affects plant growth and development. Does not seem to be involved in gibberellin or cytokinin responses. In Oryza sativa subsp. japonica (Rice), this protein is U-box domain-containing protein 75.